The chain runs to 493 residues: Probable GTP-binding protein OBGM, mitochondrial (493 aa).

A mitochondrion-targeting transit peptide spans 1–28 (MWLIRAIVPVRYLGSYKRPQKPPWMRNP). One can recognise an Obg domain in the interval 48 to 303 (TRMRDRFTLY…AVLILELKSI (256 aa)). Disordered stretches follow at residues 65–89 (SGCS…GGRG) and 146–215 (GEIP…EDDD). Positions 187 to 196 (SESDQDDTEQ) are enriched in acidic residues. Residues 304–476 (ADVGLVGMPN…LKDGLKMLVD (173 aa)) form the OBG-type G domain. Residues 310-317 (GMPNAGKS) and 356-360 (DIPGL) each bind GTP.

Belongs to the TRAFAC class OBG-HflX-like GTPase superfamily. OBG GTPase family.

The protein localises to the mitochondrion. In terms of biological role, may bind GTP and have GTPase activity. The polypeptide is Probable GTP-binding protein OBGM, mitochondrial (ATOBGM) (Arabidopsis thaliana (Mouse-ear cress)).